The following is a 1004-amino-acid chain: Unconventional myosin-Id (1004 aa).

The Myosin motor domain occupies 9 to 695; it reads FGKADFVLLD…TIFSLEEQRA (687 aa). 102–109 is an ATP binding site; that stretch reads GESGAGKT. Residues 572–594 form an actin-binding region; the sequence is MISLVEKLASKEPYYVRCIKPND. 2 consecutive IQ domains span residues 699 to 719 and 721 to 741; these read KRIV…MRYR and MRAA…SYIR. Residues 812 to 1003 enclose the TH1 domain; that stretch reads GQRADLGLQR…RSGYILSVPG (192 aa).

This sequence belongs to the TRAFAC class myosin-kinesin ATPase superfamily. Myosin family. In terms of assembly, interacts (via the two IQ motifs) with calmodulin. Interacts with F-actin.

The protein resides in the cytoplasm. Its subcellular location is the perikaryon. It localises to the cell projection. It is found in the dendrite. The protein localises to the early endosome. The protein resides in the cell cortex. Its function is as follows. Unconventional myosin that functions as actin-based motor protein with ATPase activity. Plays a role in the formation of Kupffer's vesicle, an organ that functions as a left-right organizer during embryogenesis. Plays a role in vesicular trafficking events that are required for normal lumen expansion of Kupffer's vesicle. Required for normal orientation of cilia in Kupffer's vesicle, and thus for normal, unidirectional circular flow and normal angular flow velocity, which then mediates asymmetric gene expression and left-right asymmetric development. Plays a role in endosomal protein trafficking, and especially in the transfer of cargo proteins from early to recycling endosomes. Required for normal planar cell polarity in ciliated cells, for normal rotational polarity of cilia, and for coordinated, unidirectional ciliary movement. The chain is Unconventional myosin-Id (myo1d) from Danio rerio (Zebrafish).